The chain runs to 208 residues: uncharacterized protein (208 aa).

Residues 4-71 (DYYAILNITP…SRRAQYDRES (68 aa)) enclose the J domain. The segment at 67–100 (YDRESASSSAKPRQSFFSRTNPQPQSQSQQGGPS) is disordered. A compositionally biased stretch (polar residues) spans 72-87 (ASSSAKPRQSFFSRTN). Residues 88 to 100 (PQPQSQSQQGGPS) show a composition bias toward low complexity. A helical transmembrane segment spans residues 127-147 (GIANAFWTIVGTLAGAALGFI).

It belongs to the DnaJ family.

Its subcellular location is the endoplasmic reticulum membrane. This is an uncharacterized protein from Schizosaccharomyces pombe (strain 972 / ATCC 24843) (Fission yeast).